Consider the following 314-residue polypeptide: Transcription factor DICHOTOMA (314 aa).

One can recognise a TCP domain in the interval 87-145; it reads KKDRHSKINRPQGPRDRRVRLSIGIARKFFDLQEMLGFDKPSKTLDWLLTKSKEAIKEL. One can recognise a R domain in the interval 201–218; that stretch reads KESRAKARARARERTKEK.

Its subcellular location is the nucleus. Transcription regulator involved in the dorsovental asymmetry of flowers. Promotes dorsal identity. The sequence is that of Transcription factor DICHOTOMA (DICH) from Antirrhinum majus (Garden snapdragon).